The chain runs to 315 residues: MKTLWAEISCEVPVAMVDLLSDFLVELSGNGVSIENLALDTFSLETVEDSPVKTVKAYFNGDSPLGSQLDAIETFLHAHGSAFAGFVFKHPVVATIKEEDWANNWKEYFKPVRIGSRLVIKPTWEEYAAGEGDIVLKLDPGMAFGTGAHPTTKMCLEVLEMIFYGEGPYNGDGKHLDPVTVLDVGTGSGVLSIAAAKLGAERITAIDIDADAVSVAEENLALNDALPLVAVSTTALQDVPGRYDIVLANILAEELVRLAPELVDRTAPGGYLVLSGILTEKEEFVINGFGGFGLSLIERRREAEWSCLGFRLESK.

S-adenosyl-L-methionine-binding residues include T152, G185, D207, and N249.

It belongs to the methyltransferase superfamily. PrmA family.

It is found in the cytoplasm. The enzyme catalyses L-lysyl-[protein] + 3 S-adenosyl-L-methionine = N(6),N(6),N(6)-trimethyl-L-lysyl-[protein] + 3 S-adenosyl-L-homocysteine + 3 H(+). In terms of biological role, methylates ribosomal protein L11. This is Ribosomal protein L11 methyltransferase from Geotalea uraniireducens (strain Rf4) (Geobacter uraniireducens).